Here is a 422-residue protein sequence, read N- to C-terminus: Adenylosuccinate synthetase (422 aa).

GTP is bound by residues 11-17 (GDEGKGK) and 39-41 (GHT). Asp-12 functions as the Proton acceptor in the catalytic mechanism. 2 residues coordinate Mg(2+): Asp-12 and Gly-39. IMP contacts are provided by residues 12–15 (DEGK), 37–40 (NAGH), Thr-129, Arg-143, Asn-220, Thr-235, and Arg-299. His-40 acts as the Proton donor in catalysis. Substrate is bound at residue 295-301 (VTTGRKR). GTP is bound by residues Arg-301, 327–329 (KLD), and 410–412 (GTG).

The protein belongs to the adenylosuccinate synthetase family. Homodimer. Mg(2+) is required as a cofactor.

It is found in the cytoplasm. It catalyses the reaction IMP + L-aspartate + GTP = N(6)-(1,2-dicarboxyethyl)-AMP + GDP + phosphate + 2 H(+). Its pathway is purine metabolism; AMP biosynthesis via de novo pathway; AMP from IMP: step 1/2. Functionally, plays an important role in the de novo pathway and in the salvage pathway of purine nucleotide biosynthesis. Catalyzes the first committed step in the biosynthesis of AMP from IMP. This chain is Adenylosuccinate synthetase, found in Arthroderma otae (strain ATCC MYA-4605 / CBS 113480) (Microsporum canis).